A 496-amino-acid polypeptide reads, in one-letter code: Angiopoietin-2 (496 aa).

Positions 1 to 18 (MWQLVFFALSCDLVLAAA) are cleaved as a signal peptide. Asn-89, Asn-119, Asn-133, Asn-151, Asn-240, and Asn-304 each carry an N-linked (GlcNAc...) asparagine glycan. A coiled-coil region spans residues 130 to 255 (NLLNQTAEQT…KQQHDLMETV (126 aa)). The region spanning 275–495 (KEEQIIFRDC…ATTMMIRPAD (221 aa)) is the Fibrinogen C-terminal domain. A disulfide bridge links Cys-284 with Cys-313. Residues Asp-429, Asp-431, Cys-433, and Cys-435 each coordinate Ca(2+). Intrachain disulfides connect Cys-433–Cys-435 and Cys-437–Cys-450.

As to quaternary structure, interacts with TEK/TIE2, competing for the same binding site as ANGPT1. Interacts with ITGA5. Interacts with SVEP1/polydom. Interacts with THBD; this interaction significantly inhibits the generation of activated PC and TAFIa/CPB2 by the thrombin/thrombomodulin complex.

The protein localises to the secreted. Functionally, binds to TEK/TIE2, competing for the ANGPT1 binding site, and modulating ANGPT1 signaling. Can induce tyrosine phosphorylation of TEK/TIE2 in the absence of ANGPT1. In the absence of angiogenic inducers, such as VEGF, ANGPT2-mediated loosening of cell-matrix contacts may induce endothelial cell apoptosis with consequent vascular regression. In concert with VEGF, it may facilitate endothelial cell migration and proliferation, thus serving as a permissive angiogenic signal. Involved in the regulation of lymphangiogenesis. The chain is Angiopoietin-2 (ANGPT2) from Sus scrofa (Pig).